A 143-amino-acid chain; its full sequence is Transcriptional regulator MraZ (143 aa).

2 SpoVT-AbrB domains span residues 5–47 (SHTP…PMAE) and 76–119 (AADD…DAQR).

It belongs to the MraZ family. In terms of assembly, forms oligomers.

It localises to the cytoplasm. It is found in the nucleoid. The sequence is that of Transcriptional regulator MraZ from Frankia alni (strain DSM 45986 / CECT 9034 / ACN14a).